The sequence spans 105 residues: UPF0235 protein RF_1332 (105 aa).

Belongs to the UPF0235 family.

This is UPF0235 protein RF_1332 from Rickettsia felis (strain ATCC VR-1525 / URRWXCal2) (Rickettsia azadi).